Consider the following 245-residue polypeptide: tRNA pseudouridine synthase A (245 aa).

Residue Asp-52 is the Nucleophile of the active site. Tyr-110 serves as a coordination point for substrate.

It belongs to the tRNA pseudouridine synthase TruA family. As to quaternary structure, homodimer.

The catalysed reaction is uridine(38/39/40) in tRNA = pseudouridine(38/39/40) in tRNA. In terms of biological role, formation of pseudouridine at positions 38, 39 and 40 in the anticodon stem and loop of transfer RNAs. The sequence is that of tRNA pseudouridine synthase A from Borrelia turicatae (strain 91E135).